A 484-amino-acid chain; its full sequence is Monocarboxylate transporter 2 (484 aa).

Residues 1–16 (MPAPTAVPPPHPLPPD) are Cytoplasmic-facing. Residues 17–37 (GGWGWVVVGASFISIGFSYAF) form a helical membrane-spanning segment. Topologically, residues 38-60 (PKSVTVFFKDIQEIFRAGHSKVA) are extracellular. Residues 61–81 (WISSIMLAVMYAGGPISSVLV) form a helical membrane-spanning segment. Residues 82-87 (NKYGSR) lie on the Cytoplasmic side of the membrane. Residues 88 to 108 (PVVVIGGLLCCTGMILASFST) traverse the membrane as a helical segment. Over 109 to 116 (SMIQLYLT) the chain is Extracellular. Residues 117–137 (IGFISGLGLAFNLQPALTILG) form a helical membrane-spanning segment. Topologically, residues 138–144 (KYFYRRR) are cytoplasmic. The helical transmembrane segment at 145-165 (PLASGLAMTGSPVFLSSLAPF) threads the bilayer. The Extracellular portion of the chain corresponds to 166 to 174 (NQYLFNSYG). The chain crosses the membrane as a helical span at residues 175–195 (LKGSFLILGGIFLHSCVAGSL). Residues 196–245 (MRPVGTSQQSPKSKSKVSSRHDSSTKKAPKLTLAQRINMFLDFSLFKHRG) lie on the Cytoplasmic side of the membrane. A disordered region spans residues 198–223 (PVGTSQQSPKSKSKVSSRHDSSTKKA). Residues 246–266 (FLIYLSGNVIMFLGFFAPVIF) form a helical membrane-spanning segment. Residues 267–281 (LSPYAKNRGVDDYKA) are Extracellular-facing. Residues 282-302 (AYLLSVMAFVDMFSRPCGGLI) form a helical membrane-spanning segment. At 303–311 (ANTRLVRPR) the chain is on the cytoplasmic side. The helical transmembrane segment at 312-332 (IQYFFSLAIVFTGVCHLLCPL) threads the bilayer. Residues 333–337 (AESYT) lie on the Extracellular side of the membrane. The helical transmembrane segment at 338–358 (ALVVYAIFFGYGFGSVSSILF) threads the bilayer. Residues 359 to 372 (ETLMDLVGPARFSS) lie on the Cytoplasmic side of the membrane. Residues 373–393 (AVGLVTIVECCPVLLGPPLAG) traverse the membrane as a helical segment. Residues 394–405 (KLVDETGEHKYL) lie on the Extracellular side of the membrane. The helical transmembrane segment at 406–426 (FVASGAIVVLAGIWLFIGNAI) threads the bilayer. Residues 427–484 (NYRLLAKERKREKARKKKSPNRHSKELESLSKSNQDDVAVRVPQAHRSPSDKERESNI) lie on the Cytoplasmic side of the membrane. The tract at residues 437-484 (REKARKKKSPNRHSKELESLSKSNQDDVAVRVPQAHRSPSDKERESNI) is disordered. A compositionally biased stretch (basic residues) spans 438–448 (EKARKKKSPNR). 2 stretches are compositionally biased toward basic and acidic residues: residues 449–465 (HSKE…DDVA) and 474–484 (SPSDKERESNI).

This sequence belongs to the major facilitator superfamily. Monocarboxylate porter (TC 2.A.1.13) family. Homodimer. Interacts with GRID2IP. Interacts with EMB; interaction mediates SLC16A7 targeting to the plasma membrane. Interacts with isoform 2 of BSG.

It localises to the cell membrane. Its subcellular location is the basolateral cell membrane. The protein resides in the cytoplasm. It catalyses the reaction 3-methyl-2-oxobutanoate(out) + H(+)(out) = 3-methyl-2-oxobutanoate(in) + H(+)(in). The enzyme catalyses (S)-lactate(in) + H(+)(in) = (S)-lactate(out) + H(+)(out). It carries out the reaction acetoacetate(out) + H(+)(out) = acetoacetate(in) + H(+)(in). The catalysed reaction is (R)-3-hydroxybutanoate(out) + H(+)(out) = (R)-3-hydroxybutanoate(in) + H(+)(in). It catalyses the reaction 4-methyl-2-oxopentanoate(out) + H(+)(out) = 4-methyl-2-oxopentanoate(in) + H(+)(in). The enzyme catalyses pyruvate(out) + H(+)(out) = pyruvate(in) + H(+)(in). It carries out the reaction (S)-3-hydroxybutanoate(out) + H(+)(out) = (S)-3-hydroxybutanoate(in) + H(+)(in). Transport activity exhibits steep dependence on substrate concentration. Substrate concentration sensitivity of SLC16A7 arises from the strong inter-subunit cooperativity of the SLC16A7 dimer during transport. Inhibited by AR-C155858. Proton-coupled monocarboxylate symporter. Catalyzes the rapid transport across the plasma membrane of monocarboxylates such as L-lactate, pyruvate and ketone bodies, acetoacetate, beta-hydroxybutyrate and acetate. Dimerization is functionally required and both subunits work cooperatively in transporting substrate. The protein is Monocarboxylate transporter 2 (SLC16A7) of Meriones unguiculatus (Mongolian jird).